Reading from the N-terminus, the 188-residue chain is Casparian strip membrane protein 1 (188 aa).

Residues methionine 1 to serine 24 are Cytoplasmic-facing. The chain crosses the membrane as a helical span at residues isoleucine 25–methionine 45. Residues glycine 46–threonine 72 lie on the Extracellular side of the membrane. Residue asparagine 49 is glycosylated (N-linked (GlcNAc...) asparagine). A helical membrane pass occupies residues phenylalanine 73–isoleucine 93. The Cytoplasmic portion of the chain corresponds to tyrosine 94–arginine 105. Residues isoleucine 106–serine 126 form a helical membrane-spanning segment. The Extracellular portion of the chain corresponds to alanine 127–serine 159. The helical transmembrane segment at leucine 160 to alanine 180 threads the bilayer. Residues leucine 181 to histidine 188 are Cytoplasmic-facing.

The protein belongs to the Casparian strip membrane proteins (CASP) family. In terms of assembly, homodimer and heterodimers.

The protein localises to the cell membrane. Functionally, regulates membrane-cell wall junctions and localized cell wall deposition. Required for establishment of the Casparian strip membrane domain (CSD) and the subsequent formation of Casparian strips, a cell wall modification of the root endodermis that determines an apoplastic barrier between the intraorganismal apoplasm and the extraorganismal apoplasm and prevents lateral diffusion. This Solanum tuberosum (Potato) protein is Casparian strip membrane protein 1.